A 351-amino-acid polypeptide reads, in one-letter code: Thiamine-phosphate synthase (351 aa).

The interval 1–128 (MKNPNIIQPE…SKIASEIRYE (128 aa)) is unknown. A thiamine-phosphate synthase region spans residues 129-351 (IYTLEIEILN…IIIKELSHEN (223 aa)). 4-amino-2-methyl-5-(diphosphooxymethyl)pyrimidine contacts are provided by residues 180 to 184 (QHRFK) and Asn-212. Residues Asn-213 and Asp-232 each coordinate Mg(2+). Ser-251 is a 4-amino-2-methyl-5-(diphosphooxymethyl)pyrimidine binding site. 277-279 (TLT) contacts 2-[(2R,5Z)-2-carboxy-4-methylthiazol-5(2H)-ylidene]ethyl phosphate. Position 280 (Lys-280) interacts with 4-amino-2-methyl-5-(diphosphooxymethyl)pyrimidine. 2-[(2R,5Z)-2-carboxy-4-methylthiazol-5(2H)-ylidene]ethyl phosphate is bound by residues Gly-307 and 327–328 (VS).

It belongs to the thiamine-phosphate synthase family.

The enzyme catalyses 2-[(2R,5Z)-2-carboxy-4-methylthiazol-5(2H)-ylidene]ethyl phosphate + 4-amino-2-methyl-5-(diphosphooxymethyl)pyrimidine + 2 H(+) = thiamine phosphate + CO2 + diphosphate. It catalyses the reaction 2-(2-carboxy-4-methylthiazol-5-yl)ethyl phosphate + 4-amino-2-methyl-5-(diphosphooxymethyl)pyrimidine + 2 H(+) = thiamine phosphate + CO2 + diphosphate. The catalysed reaction is 4-methyl-5-(2-phosphooxyethyl)-thiazole + 4-amino-2-methyl-5-(diphosphooxymethyl)pyrimidine + H(+) = thiamine phosphate + diphosphate. Its pathway is cofactor biosynthesis; thiamine diphosphate biosynthesis; thiamine phosphate from 4-amino-2-methyl-5-diphosphomethylpyrimidine and 4-methyl-5-(2-phosphoethyl)-thiazole: step 1/1. Functionally, condenses 4-methyl-5-(beta-hydroxyethyl)thiazole monophosphate (THZ-P) and 2-methyl-4-amino-5-hydroxymethyl pyrimidine pyrophosphate (HMP-PP) to form thiamine monophosphate (TMP). This chain is Thiamine-phosphate synthase, found in Prochlorococcus marinus subsp. pastoris (strain CCMP1986 / NIES-2087 / MED4).